Reading from the N-terminus, the 194-residue chain is Large ribosomal subunit protein uL5 (194 aa).

It belongs to the universal ribosomal protein uL5 family. Part of the 50S ribosomal subunit; part of the 5S rRNA/L5/L18/L25 subcomplex. Contacts the 5S rRNA and the P site tRNA. Forms a bridge to the 30S subunit in the 70S ribosome.

Functionally, this is one of the proteins that bind and probably mediate the attachment of the 5S RNA into the large ribosomal subunit, where it forms part of the central protuberance. In the 70S ribosome it contacts protein S13 of the 30S subunit (bridge B1b), connecting the 2 subunits; this bridge is implicated in subunit movement. Contacts the P site tRNA; the 5S rRNA and some of its associated proteins might help stabilize positioning of ribosome-bound tRNAs. In Chlorobium luteolum (strain DSM 273 / BCRC 81028 / 2530) (Pelodictyon luteolum), this protein is Large ribosomal subunit protein uL5.